A 461-amino-acid chain; its full sequence is Cysteine--tRNA ligase (461 aa).

Residue Cys29 coordinates Zn(2+). Residues 31–41 (MTVYDLCHLGH) carry the 'HIGH' region motif. Zn(2+) is bound by residues Cys213, His238, and Glu242. Positions 270–274 (KMSKS) match the 'KMSKS' region motif. Lys273 lines the ATP pocket.

It belongs to the class-I aminoacyl-tRNA synthetase family. As to quaternary structure, monomer. Zn(2+) is required as a cofactor.

The protein localises to the cytoplasm. It carries out the reaction tRNA(Cys) + L-cysteine + ATP = L-cysteinyl-tRNA(Cys) + AMP + diphosphate. The sequence is that of Cysteine--tRNA ligase from Delftia acidovorans (strain DSM 14801 / SPH-1).